A 249-amino-acid polypeptide reads, in one-letter code: ATP synthase subunit a (249 aa).

The next 6 helical transmembrane spans lie at 30–50, 84–104, 113–133, 143–163, 196–216, and 221–241; these read SAYM…GSAG, FFPL…VGII, HIIV…IYGF, IFVP…IEVF, LLAG…GMVV, and LELL…CIYL.

It belongs to the ATPase A chain family. As to quaternary structure, F-type ATPases have 2 components, CF(1) - the catalytic core - and CF(0) - the membrane proton channel. CF(1) has five subunits: alpha(3), beta(3), gamma(1), delta(1), epsilon(1). CF(0) has four main subunits: a, b, b' and c.

It localises to the cell inner membrane. Its function is as follows. Key component of the proton channel; it plays a direct role in the translocation of protons across the membrane. This Rhodopseudomonas palustris (strain BisA53) protein is ATP synthase subunit a.